We begin with the raw amino-acid sequence, 369 residues long: Cytochrome P450 monooxygenase apf8 (369 aa).

C303 serves as a coordination point for heme.

Belongs to the cytochrome P450 family. Requires heme as cofactor.

Its pathway is secondary metabolite biosynthesis. Its function is as follows. Cytochrome P450 monooxygenase; part of the gene cluster that mediates the biosynthesis of the cyclic tetrapeptide apicidin F (APF). The non-ribosomal peptide synthetase apf1 incorporates four different amino acids to produce apicidin F: L-phenylalanine, D-pipecolic acid (D-pip), N-methoxy-L-tryptophan and L-2-aminooctanedioic acid. L-Phenylalanine is the only proteinogenic amino acid directly used by apf1. The 3 other apf1 substrates are non-proteinogenic and have to be modified by other enzymes of the cluster. Lysine is converted to delta-1-pyrroline-5-carboxylate (P5C) which is reduced to L-pipecolic acid (L-pip) by apf3. L-pip is epimerized to D-pip, probably by apf1 activity, prior to incorporation. L-Tryptophan is N-oxidyzed by one of the cytochrome P450 monooxygenases (apf7 or apf8), and further methylated at the hydroxy group by the O-methyltransferase apf6 to yield N-methoxy-L-tryptophan. The synthesis of the fourth apf1 substrate is more complex. The fatty acid synthase apf5 is involved in the synthesis of the octanoic acid backbone of L-2-aminooctanedioic acid by fixing one acetyl-CoA unit and three malonyl-CoA units. Then one of the cytochrome P450 monooxygenases (apf7 or apf8) may oxidize this backbone to 2-oxooctanoic acid. The aminotransferase apf4 is predicted to catalyze the exchange of the keto group with an amino group. The next step would be the oxidation of 2-aminooctanoic acid by one of the cytochrome P450 monooxygenases (apf7 or apf8). The last step is the oxidation of 2-amino-8-hydroxyoctanoic acid to 2-aminooctanedioic acid is catalyzed by the FAD-dependent monooxygenase apf9. The sequence is that of Cytochrome P450 monooxygenase apf8 from Gibberella fujikuroi (strain CBS 195.34 / IMI 58289 / NRRL A-6831) (Bakanae and foot rot disease fungus).